Reading from the N-terminus, the 439-residue chain is Glutamate-1-semialdehyde 2,1-aminomutase (439 aa).

K279 is subject to N6-(pyridoxal phosphate)lysine.

It belongs to the class-III pyridoxal-phosphate-dependent aminotransferase family. HemL subfamily. As to quaternary structure, homodimer. Requires pyridoxal 5'-phosphate as cofactor.

It is found in the cytoplasm. The enzyme catalyses (S)-4-amino-5-oxopentanoate = 5-aminolevulinate. It participates in porphyrin-containing compound metabolism; protoporphyrin-IX biosynthesis; 5-aminolevulinate from L-glutamyl-tRNA(Glu): step 2/2. This chain is Glutamate-1-semialdehyde 2,1-aminomutase, found in Rhodopirellula baltica (strain DSM 10527 / NCIMB 13988 / SH1).